Here is a 300-residue protein sequence, read N- to C-terminus: Epimerase family protein SAV0769 (300 aa).

This sequence belongs to the NAD(P)-dependent epimerase/dehydratase family. SDR39U1 subfamily.

The polypeptide is Epimerase family protein SAV0769 (Staphylococcus aureus (strain Mu50 / ATCC 700699)).